Reading from the N-terminus, the 671-residue chain is UvrABC system protein B (671 aa).

Residues 25 to 178 form the Helicase ATP-binding domain; it reads EGIKKGYKHQ…DAMLKKLVEI (154 aa). Residue 38 to 45 participates in ATP binding; that stretch reads GVTGSGKT. Residues 91 to 114 carry the Beta-hairpin motif; it reads YYDYYQPEAYIPETDTYIEKDALI. The region spanning 435-601 is the Helicase C-terminal domain; it reads QVEDLLEEIH…TVKSKIKDIL (167 aa). Residues 626 to 661 enclose the UVR domain; that stretch reads EETIKKLEQEMKHAAENLEFEKAAEIRDKIFKIKEK.

It belongs to the UvrB family. In terms of assembly, forms a heterotetramer with UvrA during the search for lesions. Interacts with UvrC in an incision complex.

The protein localises to the cytoplasm. Functionally, the UvrABC repair system catalyzes the recognition and processing of DNA lesions. A damage recognition complex composed of 2 UvrA and 2 UvrB subunits scans DNA for abnormalities. Upon binding of the UvrA(2)B(2) complex to a putative damaged site, the DNA wraps around one UvrB monomer. DNA wrap is dependent on ATP binding by UvrB and probably causes local melting of the DNA helix, facilitating insertion of UvrB beta-hairpin between the DNA strands. Then UvrB probes one DNA strand for the presence of a lesion. If a lesion is found the UvrA subunits dissociate and the UvrB-DNA preincision complex is formed. This complex is subsequently bound by UvrC and the second UvrB is released. If no lesion is found, the DNA wraps around the other UvrB subunit that will check the other stand for damage. The polypeptide is UvrABC system protein B (Thermodesulfovibrio yellowstonii (strain ATCC 51303 / DSM 11347 / YP87)).